We begin with the raw amino-acid sequence, 93 residues long: Small ribosomal subunit protein uS19 (93 aa).

It belongs to the universal ribosomal protein uS19 family.

In terms of biological role, protein S19 forms a complex with S13 that binds strongly to the 16S ribosomal RNA. In Campylobacter jejuni subsp. jejuni serotype O:6 (strain 81116 / NCTC 11828), this protein is Small ribosomal subunit protein uS19.